The primary structure comprises 930 residues: RNA-binding protein 10 (930 aa).

Composition is skewed to basic and acidic residues over residues 1–14 and 21–45; these read MEYE…DRTG and RSQD…RSYP. The disordered stretch occupies residues 1 to 127; sequence MEYERRGGRG…EDEEEEEEKA (127 aa). The span at 59–70 shows a compositional bias: acidic residues; the sequence is DSSEEQSAEDSY. A phosphoserine mark is found at Ser61 and Ser89. Residues 80–89 are compositionally biased toward basic residues; it reads RRRRRRHRHS. Basic and acidic residues predominate over residues 98–111; sequence RDGDYRDQDYRTEQ. Residues 112-125 show a composition bias toward acidic residues; sequence GEEEEEEDEEEEEE. Residues 129–209 enclose the RRM 1 domain; the sequence is NIVMLRMLPQ…QKVSMHYSDP (81 aa). Residues 212 to 242 form a RanBP2-type zinc finger; sequence KINEDWLCNKCGVQNFKRREKCFKCGVPKSE. Residues 300-384 form the RRM 2 domain; that stretch reads DTIILRNLNP…KTINVEFAKG (85 aa). Residue Lys383 is modified to N6-acetyllysine. Disordered regions lie at residues 464-487, 503-522, 537-566, 620-646, and 712-753; these read GPGM…EAGA, APGL…TATN, ELQS…QYPV, EQSA…HKTK, and DLPK…EEKL. Polar residues predominate over residues 507-522; that stretch reads YQQSAEGSSGQSTATN. Over residues 540-562 the composition is skewed to low complexity; that stretch reads SPTQPSSSAFPPATSPTAPEAYS. Basic and acidic residues predominate over residues 623-639; sequence ADGHKDTGASSKEGKEK. Phosphoserine occurs at positions 718, 723, 733, 736, and 738. A compositionally biased stretch (basic and acidic residues) spans 743-753; the sequence is ERGGPEREEKL. Residues 759 to 784 form a C2H2-type; atypical zinc finger; it reads LACLLCRRQFPSKEALIRHQQLSGLH. Residues Ser781, Ser797, and Ser845 each carry the phosphoserine modification. The disordered stretch occupies residues 818–861; the sequence is AAERREKYGIPEPPEPKRRKYGGISTASVDFEQPTRDGLGSDNI. Residues 858-904 enclose the G-patch domain; sequence SDNIGSRMLQAMGWKEGSGLGRKKQGIVTPIEAQTRVRGSGLGARGS. Arg902 is subject to Omega-N-methylarginine.

Associates with the spliceosome. Component of a large chromatin remodeling complex, at least composed of MYSM1, PCAF, RBM10 and KIF11/TRIP5.

The protein resides in the nucleus. Its function is as follows. Binds to ssRNA containing the consensus sequence 5'-AGGUAA-3'. May be involved in post-transcriptional processing, most probably in mRNA splicing. Binds to RNA homopolymers, with a preference for poly(G) and poly(U) and little for poly(A). May bind to specific miRNA hairpins. The polypeptide is RNA-binding protein 10 (Mus musculus (Mouse)).